Here is a 69-residue protein sequence, read N- to C-terminus: MVQIVVRDNNVEQALRALKKKMQREGLFREMKARQHFEKPSEKKARQRAEAVRRARKLARKRAQREGIV.

This sequence belongs to the bacterial ribosomal protein bS21 family.

The protein is Small ribosomal subunit protein bS21 of Hyphomonas neptunium (strain ATCC 15444).